Consider the following 216-residue polypeptide: Ras-related protein Rab-2B (216 aa).

Residues glycine 16, valine 17, glycine 18, lysine 19, serine 20, and cysteine 21 each contribute to the GDP site. The GTP site is built by glycine 16, valine 17, glycine 18, lysine 19, serine 20, cysteine 21, and threonine 38. Position 20 (serine 20) interacts with Mg(2+). The Switch 1 signature appears at 37 to 42 (LTIGVE). The Mg(2+) site is built by threonine 38 and aspartate 61. The Switch 2 signature appears at 63 to 72 (AGQESFRSIT). 6 residues coordinate GTP: glycine 64, asparagine 119, lysine 120, aspartate 122, alanine 150, and lysine 151. Asparagine 119 is a binding site for GDP. Residues aspartate 122, alanine 150, and lysine 151 each coordinate GDP. A disordered region spans residues 189–216 (PQQSISTSVGPSASQRNSRDIGSNSGCC). Phosphoserine is present on serine 202. S-geranylgeranyl cysteine attachment occurs at residues cysteine 215 and cysteine 216.

The protein belongs to the small GTPase superfamily. Rab family. In terms of assembly, interacts (in GTP-bound form) with GARIN4 (via N-terminus). Interacts (in GTP-bound form) with GARIN5A. Interacts (in GTP-bound form) with GARIN1B. Interacts with VPS39 and VPS41. The cofactor is Mg(2+). In terms of tissue distribution, expressed in kidney, prostate, lung, liver, thymus, colon, pancreas, and skeletal muscle, and low levels in placenta. Not detected in heart, brain, spleen, testis, ovary, small intestine and leukocyte.

It localises to the cell membrane. The protein localises to the endoplasmic reticulum membrane. Its subcellular location is the golgi apparatus membrane. It is found in the cytoplasmic vesicle. The protein resides in the secretory vesicle. It localises to the acrosome. The protein localises to the autophagosome membrane. It carries out the reaction GTP + H2O = GDP + phosphate + H(+). Its activity is regulated as follows. Regulated by guanine nucleotide exchange factors (GEFs) which promote the exchange of bound GDP for free GTP, GTPase activating proteins (GAPs) which increase the GTP hydrolysis activity, and GDP dissociation inhibitors (GDIs) which inhibit the dissociation of the nucleotide from the GTPase. Functionally, the small GTPases Rab are key regulators of intracellular membrane trafficking, from the formation of transport vesicles to their fusion with membranes. Rabs cycle between active GTP-bound and inactive GDP-bound states. In their active state, drive transport of vesicular carriers from donor organelles to acceptor organelles to regulate the membrane traffic that maintains organelle identity and morphology. Regulates the compacted morphology of the Golgi. Promotes cytosolic DNA-induced innate immune responses. Regulates IFN responses against DNA viruses by regulating the CGAS-STING signaling axis. Together with RAB2A redundantly required for efficient autophagic flux. This Homo sapiens (Human) protein is Ras-related protein Rab-2B.